The following is a 192-amino-acid chain: MAAERERGGRERGGRDRDERDSEFVDKLVHINRVAKVVKGGKRFGFAALVVIGDQKGRVGFGHGKAREVPEAIRKATDSAKRNLTRVPLREGRTLHHDIAGRHGAGRVYLRAAPAGTGIIAGGPMRAVFETLGIQDVVAKSVGSSNPYNMIRATFDALKHQDSPRSVANRRNIKVSVLQARRVGGDAEASAD.

The interval 1-21 (MAAERERGGRERGGRDRDERD) is disordered. The 64-residue stretch at 24–87 (FVDKLVHINR…DSAKRNLTRV (64 aa)) folds into the S5 DRBM domain.

Belongs to the universal ribosomal protein uS5 family. As to quaternary structure, part of the 30S ribosomal subunit. Contacts proteins S4 and S8.

Its function is as follows. With S4 and S12 plays an important role in translational accuracy. Functionally, located at the back of the 30S subunit body where it stabilizes the conformation of the head with respect to the body. The polypeptide is Small ribosomal subunit protein uS5 (Afipia carboxidovorans (strain ATCC 49405 / DSM 1227 / KCTC 32145 / OM5) (Oligotropha carboxidovorans)).